The sequence spans 34 residues: GIFLNALKNFAKTAGKGVLQSVLNTASCKLSKQC.

Cys28 and Cys34 are oxidised to a cystine.

As to expression, expressed by the skin glands.

It is found in the secreted. Antimicrobial peptide. The polypeptide is Brevinin-2Rf (Pelophylax ridibundus (Marsh frog)).